Here is a 356-residue protein sequence, read N- to C-terminus: Peptide chain release factor 1 (356 aa).

Q235 is subject to N5-methylglutamine.

It belongs to the prokaryotic/mitochondrial release factor family. Post-translationally, methylated by PrmC. Methylation increases the termination efficiency of RF1.

The protein resides in the cytoplasm. Its function is as follows. Peptide chain release factor 1 directs the termination of translation in response to the peptide chain termination codons UAG and UAA. This chain is Peptide chain release factor 1, found in Mycobacteroides abscessus (strain ATCC 19977 / DSM 44196 / CCUG 20993 / CIP 104536 / JCM 13569 / NCTC 13031 / TMC 1543 / L948) (Mycobacterium abscessus).